A 568-amino-acid chain; its full sequence is 2-succinyl-5-enolpyruvyl-6-hydroxy-3-cyclohexene-1-carboxylate synthase (568 aa).

This sequence belongs to the TPP enzyme family. MenD subfamily. In terms of assembly, homodimer. Mg(2+) serves as cofactor. Mn(2+) is required as a cofactor. The cofactor is thiamine diphosphate.

The enzyme catalyses isochorismate + 2-oxoglutarate + H(+) = 5-enolpyruvoyl-6-hydroxy-2-succinyl-cyclohex-3-ene-1-carboxylate + CO2. It participates in quinol/quinone metabolism; 1,4-dihydroxy-2-naphthoate biosynthesis; 1,4-dihydroxy-2-naphthoate from chorismate: step 2/7. Its pathway is quinol/quinone metabolism; menaquinone biosynthesis. In terms of biological role, catalyzes the thiamine diphosphate-dependent decarboxylation of 2-oxoglutarate and the subsequent addition of the resulting succinic semialdehyde-thiamine pyrophosphate anion to isochorismate to yield 2-succinyl-5-enolpyruvyl-6-hydroxy-3-cyclohexene-1-carboxylate (SEPHCHC). The protein is 2-succinyl-5-enolpyruvyl-6-hydroxy-3-cyclohexene-1-carboxylate synthase of Pasteurella multocida (strain Pm70).